Consider the following 464-residue polypeptide: UPF0210 protein Cgl1545/cg1743 (464 aa).

The protein belongs to the UPF0210 family. Homodimer.

This is UPF0210 protein Cgl1545/cg1743 from Corynebacterium glutamicum (strain ATCC 13032 / DSM 20300 / JCM 1318 / BCRC 11384 / CCUG 27702 / LMG 3730 / NBRC 12168 / NCIMB 10025 / NRRL B-2784 / 534).